The following is a 78-amino-acid chain: MLILTRKAGESLHLGDDIRITVLGIQGKQVKIGIEVPGDMVVYREEVYRRVIEENRMALDISNADLLAATKIWHGRTK.

The protein belongs to the CsrA/RsmA family. In terms of assembly, homodimer; the beta-strands of each monomer intercalate to form a hydrophobic core, while the alpha-helices form wings that extend away from the core.

It localises to the cytoplasm. In terms of biological role, a translational regulator that binds mRNA to regulate translation initiation and/or mRNA stability. Usually binds in the 5'-UTR at or near the Shine-Dalgarno sequence preventing ribosome-binding, thus repressing translation. Its main target seems to be the major flagellin gene, while its function is anatagonized by FliW. The sequence is that of Translational regulator CsrA from Nitratidesulfovibrio vulgaris (strain ATCC 29579 / DSM 644 / CCUG 34227 / NCIMB 8303 / VKM B-1760 / Hildenborough) (Desulfovibrio vulgaris).